Consider the following 374-residue polypeptide: uncharacterized protein (374 aa).

Residues 182 to 201 (PALGESPQGQKSSASSDKAV) are disordered. Polar residues predominate over residues 188 to 197 (PQGQKSSASS).

This is an uncharacterized protein from Rattus norvegicus (Rat).